Here is an 83-residue protein sequence, read N- to C-terminus: Large ribosomal subunit protein eL31 (83 aa).

It belongs to the eukaryotic ribosomal protein eL31 family.

The chain is Large ribosomal subunit protein eL31 from Methanococcus aeolicus (strain ATCC BAA-1280 / DSM 17508 / OCM 812 / Nankai-3).